Consider the following 634-residue polypeptide: Threonine--tRNA ligase (634 aa).

Residues 1–61 (MISLKFPNNE…SESGEFRLYT (61 aa)) enclose the TGS domain. Positions 242-532 (DHRKIGQELD…LIEHYAGAFP (291 aa)) are catalytic. Residues cysteine 333, histidine 384, and histidine 509 each coordinate Zn(2+).

The protein belongs to the class-II aminoacyl-tRNA synthetase family. As to quaternary structure, homodimer. It depends on Zn(2+) as a cofactor.

The protein resides in the cytoplasm. It carries out the reaction tRNA(Thr) + L-threonine + ATP = L-threonyl-tRNA(Thr) + AMP + diphosphate + H(+). Functionally, catalyzes the attachment of threonine to tRNA(Thr) in a two-step reaction: L-threonine is first activated by ATP to form Thr-AMP and then transferred to the acceptor end of tRNA(Thr). Also edits incorrectly charged L-seryl-tRNA(Thr). The polypeptide is Threonine--tRNA ligase (Carboxydothermus hydrogenoformans (strain ATCC BAA-161 / DSM 6008 / Z-2901)).